The chain runs to 162 residues: UPF0262 protein HNE_1347 (162 aa).

It belongs to the UPF0262 family.

The sequence is that of UPF0262 protein HNE_1347 from Hyphomonas neptunium (strain ATCC 15444).